A 493-amino-acid polypeptide reads, in one-letter code: Tripartite motif-containing protein 5 (493 aa).

Ala2 carries the post-translational modification N-acetylalanine. An RING-type zinc finger spans residues 15 to 59; the sequence is CPICLELLTQPLSLDCGHSFCQACLTANHEKSMLDKGESSCPVCR. Ser86 bears the Phosphoserine mark. The segment at 90-132 adopts a B box-type zinc-finger fold; that stretch reads QKVDHCARHGEKLLLFCQEDGKVICWLCERSQEHRGHHTFLTE. Positions 95, 98, 117, and 123 each coordinate Zn(2+). Residues 131 to 240 adopt a coiled-coil conformation; it reads TEEVAQECQV…LISDLEHRLQ (110 aa). A required for interaction with GABARAP and for autophagy region spans residues 185 to 198; that stretch reads FEQLRDILDWEESN. Positions 281–493 constitute a B30.2/SPRY domain; sequence LKGMLEVFRE…VPMTLCSPSS (213 aa).

The protein belongs to the TRIM/RBCC family. In terms of assembly, can form homodimers and homotrimers. In addition to lower-order dimerization, also exhibits a higher-order multimerization and both low- and high-order multimerizations are essential for its restriction activity. Interacts with BTBD1 and BTBD2. Interacts with PSMC4, PSMC5, PSMD7 and HSPA8/HSC70. Interacts (via B30.2/SPRY domain) with HSPA1A/B. Interacts with PSMC2, MAP3K7/TAK1, TAB2 and TAB3. Interacts with SQSTM1. Interacts with TRIM6 and TRIM34. Interacts with ULK1 (phosphorylated form), GABARAP, GABARAPL1, GABARAPL2, MAP1LC3A, MAP1LC3C and BECN1. Degraded in a proteasome-independent fashion in the absence of viral infection but in a proteasome-dependent fashion following exposure to restriction sensitive virus. Post-translationally, autoubiquitinated in a RING finger- and UBE2D2-dependent manner. Monoubiquitinated by TRIM21. Deubiquitinated by Yersinia YopJ. Ubiquitination may not lead to proteasomal degradation.

It is found in the cytoplasm. It localises to the nucleus. The catalysed reaction is S-ubiquitinyl-[E2 ubiquitin-conjugating enzyme]-L-cysteine + [acceptor protein]-L-lysine = [E2 ubiquitin-conjugating enzyme]-L-cysteine + N(6)-ubiquitinyl-[acceptor protein]-L-lysine.. The protein operates within protein modification; protein ubiquitination. Its function is as follows. Capsid-specific restriction factor that prevents infection from non-host-adapted retroviruses. Blocks viral replication early in the life cycle, after viral entry but before reverse transcription. In addition to acting as a capsid-specific restriction factor, also acts as a pattern recognition receptor that activates innate immune signaling in response to the retroviral capsid lattice. Binding to the viral capsid triggers its E3 ubiquitin ligase activity, and in concert with the heterodimeric ubiquitin conjugating enzyme complex UBE2V1-UBE2N (also known as UBC13-UEV1A complex) generates 'Lys-63'-linked polyubiquitin chains, which in turn are catalysts in the autophosphorylation of the MAP3K7/TAK1 complex (includes TAK1, TAB2, and TAB3). Activation of the MAP3K7/TAK1 complex by autophosphorylation results in the induction and expression of NF-kappa-B and MAPK-responsive inflammatory genes, thereby leading to an innate immune response in the infected cell. Plays a role in regulating autophagy through activation of autophagy regulator BECN1 by causing its dissociation from its inhibitors BCL2 and TAB2. This is Tripartite motif-containing protein 5 (TRIM5) from Gorilla gorilla gorilla (Western lowland gorilla).